A 149-amino-acid polypeptide reads, in one-letter code: Arginine repressor (149 aa).

The protein belongs to the ArgR family.

Its subcellular location is the cytoplasm. It participates in amino-acid biosynthesis; L-arginine biosynthesis [regulation]. Regulates arginine biosynthesis genes. The sequence is that of Arginine repressor from Shouchella clausii (strain KSM-K16) (Alkalihalobacillus clausii).